The primary structure comprises 223 residues: Type III pantothenate kinase (223 aa).

17 to 24 (DIGNTRIH) lines the ATP pocket. Substrate is bound by residues tyrosine 81 and 85-88 (GIDR). Catalysis depends on aspartate 87, which acts as the Proton acceptor. Aspartate 102 serves as a coordination point for K(+). Serine 105 lines the ATP pocket. Residue threonine 157 coordinates substrate.

Belongs to the type III pantothenate kinase family. Homodimer. NH4(+) serves as cofactor. Requires K(+) as cofactor.

It localises to the cytoplasm. The catalysed reaction is (R)-pantothenate + ATP = (R)-4'-phosphopantothenate + ADP + H(+). It participates in cofactor biosynthesis; coenzyme A biosynthesis; CoA from (R)-pantothenate: step 1/5. Functionally, catalyzes the phosphorylation of pantothenate (Pan), the first step in CoA biosynthesis. The sequence is that of Type III pantothenate kinase from Helicobacter pylori (strain J99 / ATCC 700824) (Campylobacter pylori J99).